Consider the following 360-residue polypeptide: Probable dual-specificity RNA methyltransferase RlmN (360 aa).

The active-site Proton acceptor is the Glu103. One can recognise a Radical SAM core domain in the interval 109–342 (HEYGNSVCVT…VTIRREQGHD (234 aa)). A disulfide bond links Cys116 and Cys347. The [4Fe-4S] cluster site is built by Cys123, Cys127, and Cys130. Residues 173 to 174 (GE), Ser205, 228 to 230 (SLH), and Asn304 contribute to the S-adenosyl-L-methionine site. Cys347 (S-methylcysteine intermediate) is an active-site residue.

The protein belongs to the radical SAM superfamily. RlmN family. [4Fe-4S] cluster is required as a cofactor.

Its subcellular location is the cytoplasm. It carries out the reaction adenosine(2503) in 23S rRNA + 2 reduced [2Fe-2S]-[ferredoxin] + 2 S-adenosyl-L-methionine = 2-methyladenosine(2503) in 23S rRNA + 5'-deoxyadenosine + L-methionine + 2 oxidized [2Fe-2S]-[ferredoxin] + S-adenosyl-L-homocysteine. The catalysed reaction is adenosine(37) in tRNA + 2 reduced [2Fe-2S]-[ferredoxin] + 2 S-adenosyl-L-methionine = 2-methyladenosine(37) in tRNA + 5'-deoxyadenosine + L-methionine + 2 oxidized [2Fe-2S]-[ferredoxin] + S-adenosyl-L-homocysteine. Its function is as follows. Specifically methylates position 2 of adenine 2503 in 23S rRNA and position 2 of adenine 37 in tRNAs. The chain is Probable dual-specificity RNA methyltransferase RlmN from Bacillus pumilus (strain SAFR-032).